The following is a 247-amino-acid chain: TLC domain-containing protein 1 (247 aa).

Positions Met1–Cys27 are cleaved as a signal peptide. Over Arg28 to His46 the chain is Extracellular. The TLC domain occupies Leu40 to Arg234. A helical transmembrane segment spans residues Asn47 to Trp67. Topologically, residues Gln68 to Ser83 are cytoplasmic. Residues Gly84–Val104 form a helical membrane-spanning segment. Over Ser105–Gly123 the chain is Extracellular. Residues Ala124–Val144 constitute an intramembrane region (helical). The Extracellular portion of the chain corresponds to Glu145–Tyr173. The helical transmembrane segment at Ile174–Phe194 threads the bilayer. Residues Leu195–Arg201 lie on the Cytoplasmic side of the membrane. A helical membrane pass occupies residues Thr202–Phe222. Residues Ser223 to Glu247 lie on the Extracellular side of the membrane.

It localises to the cell membrane. Its function is as follows. Regulates the composition and fluidity of the plasma membrane. Inhibits the incorporation of membrane-fluidizing phospholipids containing omega-3 long-chain polyunsaturated fatty acids (LCPUFA) and thereby promotes membrane rigidity. Does not appear to have any effect on LCPUFA synthesis. This chain is TLC domain-containing protein 1 (Tlcd1), found in Mus musculus (Mouse).